The sequence spans 581 residues: La-related protein 7 (581 aa).

M1 is subject to N-acetylmethionine. Residues 1–10 show a composition bias toward polar residues; that stretch reads METESGNQKN. 3 disordered regions span residues 1 to 28, 188 to 368, and 410 to 440; these read METE…KKKR, NPPE…ERHK, and KSES…CPTQ. The 95-residue stretch at 28-122 folds into the HTH La-type RNA-binding domain; it reads RSRVKQVLAD…KPLGERPKDE (95 aa). The 79-residue stretch at 125-203 folds into the RRM domain; sequence RTVYVELLPK…PRKPGIFPKT (79 aa). Over residues 219-228 the composition is skewed to basic residues; it reads KKKKKKKGRM. Residues 229 to 240 show a composition bias toward basic and acidic residues; the sequence is KKEDNVQAKEEN. A Glycyl lysine isopeptide (Lys-Gly) (interchain with G-Cter in SUMO2) cross-link involves residue K237. T257 carries the post-translational modification Phosphothreonine. 6 positions are modified to phosphoserine: S258, S261, S273, S298, S299, and S300. The span at 316-335 shows a compositional bias: basic and acidic residues; sequence IQKDIIKEPSEASKENRDIE. Residue S337 is modified to Phosphoserine. T338 bears the Phosphothreonine mark. Phosphoserine is present on S351. Basic residues predominate over residues 354 to 367; it reads KTKRKHKKKHKERH. A Glycyl lysine isopeptide (Lys-Gly) (interchain with G-Cter in SUMO2) cross-link involves residue K410. The 114-residue stretch at 449 to 562 folds into the xRRM domain; that stretch reads QFVSGVIVKI…TEKLITKAEK (114 aa).

This sequence belongs to the LARP7 family. Core component of the 7SK RNP complex, at least composed of 7SK RNA, LARP7, MEPCE, HEXIM1 (or HEXIM2) and P-TEFb (composed of CDK9 and CCNT1/cyclin-T1). Interacts with METTL16. Interacts with RBM7; upon genotoxic stress this interaction is enhanced, triggering the release of inactive P-TEFb complex from the core, yielding to P-TEFb complex activation. Associates with box C/D small nucleolar ribonucleoprotein (snoRNP) complexes.

It is found in the nucleus. It localises to the nucleoplasm. Its function is as follows. RNA-binding protein that specifically binds distinct small nuclear RNA (snRNAs) and regulates their processing and function. Specifically binds the 7SK snRNA (7SK RNA) and acts as a core component of the 7SK ribonucleoprotein (RNP) complex, thereby acting as a negative regulator of transcription elongation by RNA polymerase II. The 7SK RNP complex sequesters the positive transcription elongation factor b (P-TEFb) in a large inactive 7SK RNP complex preventing RNA polymerase II phosphorylation and subsequent transcriptional elongation. The 7SK RNP complex also promotes snRNA gene transcription by RNA polymerase II via interaction with the little elongation complex (LEC). LARP7 specifically binds to the highly conserved 3'-terminal U-rich stretch of 7SK RNA; on stimulation, remains associated with 7SK RNA, whereas P-TEFb is released from the complex. LARP7 also acts as a regulator of mRNA splicing fidelity by promoting U6 snRNA processing. Specifically binds U6 snRNAs and associates with a subset of box C/D RNP complexes: promotes U6 snRNA 2'-O-methylation by facilitating U6 snRNA loading into box C/D RNP complexes. U6 snRNA 2'-O-methylation is required for mRNA splicing fidelity. Binds U6 snRNAs with a 5'-CAGGG-3' sequence motif. U6 snRNA processing is required for spermatogenesis. The chain is La-related protein 7 from Macaca fascicularis (Crab-eating macaque).